Here is a 573-residue protein sequence, read N- to C-terminus: Membrane protein insertase YidC (573 aa).

The chain crosses the membrane as a helical span at residues 6 to 26 (VFLIFAWLMVAALLWMEWGKD). Positions 63–82 (PQAGSPAAVPATSTTTATPA) are disordered. 5 helical membrane passes run 355-375 (FSIM…LHSF), 379-399 (WGWA…PLSA), 446-466 (GGCL…WVLV), 488-508 (PYFI…KLTP), and 524-544 (PLVF…YWVV).

This sequence belongs to the OXA1/ALB3/YidC family. Type 1 subfamily. Interacts with the Sec translocase complex via SecD. Specifically interacts with transmembrane segments of nascent integral membrane proteins during membrane integration.

It is found in the cell inner membrane. In terms of biological role, required for the insertion and/or proper folding and/or complex formation of integral membrane proteins into the membrane. Involved in integration of membrane proteins that insert both dependently and independently of the Sec translocase complex, as well as at least some lipoproteins. Aids folding of multispanning membrane proteins. In Xanthomonas campestris pv. campestris (strain 8004), this protein is Membrane protein insertase YidC.